Reading from the N-terminus, the 177-residue chain is Ribosome maturation factor RimP (177 aa).

This sequence belongs to the RimP family.

Its subcellular location is the cytoplasm. Its function is as follows. Required for maturation of 30S ribosomal subunits. The polypeptide is Ribosome maturation factor RimP (Methylibium petroleiphilum (strain ATCC BAA-1232 / LMG 22953 / PM1)).